The sequence spans 358 residues: Alanine racemase (358 aa).

Lysine 34 (proton acceptor; specific for D-alanine) is an active-site residue. Residue lysine 34 is modified to N6-(pyridoxal phosphate)lysine. Arginine 129 contacts substrate. The active-site Proton acceptor; specific for L-alanine is the tyrosine 254. Position 302 (methionine 302) interacts with substrate.

This sequence belongs to the alanine racemase family. Pyridoxal 5'-phosphate is required as a cofactor.

It catalyses the reaction L-alanine = D-alanine. It participates in amino-acid biosynthesis; D-alanine biosynthesis; D-alanine from L-alanine: step 1/1. Its function is as follows. Catalyzes the interconversion of L-alanine and D-alanine. May also act on other amino acids. The protein is Alanine racemase (alr) of Vibrio atlanticus (strain LGP32) (Vibrio splendidus (strain Mel32)).